A 66-amino-acid chain; its full sequence is Large ribosomal subunit protein bL33c (66 aa).

Belongs to the bacterial ribosomal protein bL33 family.

Its subcellular location is the plastid. It localises to the chloroplast. This is Large ribosomal subunit protein bL33c from Welwitschia mirabilis (Tree tumbo).